A 320-amino-acid chain; its full sequence is Cytochrome f (320 aa).

The first 35 residues, 1 to 35 (MQTRNNFSWIKEQITRSISVSLMIYIITRASISNA), serve as a signal peptide directing secretion. Residues tyrosine 36, cysteine 56, cysteine 59, and histidine 60 each coordinate heme. A helical transmembrane segment spans residues 286–306 (VQGLLFFLASVILAQIFLVLK).

The protein belongs to the cytochrome f family. In terms of assembly, the 4 large subunits of the cytochrome b6-f complex are cytochrome b6, subunit IV (17 kDa polypeptide, petD), cytochrome f and the Rieske protein, while the 4 small subunits are PetG, PetL, PetM and PetN. The complex functions as a dimer. Heme is required as a cofactor.

The protein resides in the plastid. It is found in the chloroplast thylakoid membrane. Functionally, component of the cytochrome b6-f complex, which mediates electron transfer between photosystem II (PSII) and photosystem I (PSI), cyclic electron flow around PSI, and state transitions. The polypeptide is Cytochrome f (Lactuca sativa (Garden lettuce)).